We begin with the raw amino-acid sequence, 363 residues long: 3-dehydroquinate synthase (363 aa).

NAD(+) contacts are provided by residues 134-135 (TT), lysine 147, lysine 156, and 174-177 (TLIT). Residues glutamate 189, histidine 254, and histidine 271 each contribute to the Zn(2+) site.

It belongs to the sugar phosphate cyclases superfamily. Dehydroquinate synthase family. The cofactor is NAD(+). It depends on Co(2+) as a cofactor. Zn(2+) serves as cofactor.

It localises to the cytoplasm. The enzyme catalyses 7-phospho-2-dehydro-3-deoxy-D-arabino-heptonate = 3-dehydroquinate + phosphate. Its pathway is metabolic intermediate biosynthesis; chorismate biosynthesis; chorismate from D-erythrose 4-phosphate and phosphoenolpyruvate: step 2/7. Its function is as follows. Catalyzes the conversion of 3-deoxy-D-arabino-heptulosonate 7-phosphate (DAHP) to dehydroquinate (DHQ). The polypeptide is 3-dehydroquinate synthase (Prochlorococcus marinus subsp. pastoris (strain CCMP1986 / NIES-2087 / MED4)).